The sequence spans 299 residues: Ribosomal protein L11 methyltransferase (299 aa).

S-adenosyl-L-methionine is bound by residues Thr-152, Gly-172, Asp-194, and Asn-234.

This sequence belongs to the methyltransferase superfamily. PrmA family.

The protein localises to the cytoplasm. The enzyme catalyses L-lysyl-[protein] + 3 S-adenosyl-L-methionine = N(6),N(6),N(6)-trimethyl-L-lysyl-[protein] + 3 S-adenosyl-L-homocysteine + 3 H(+). In terms of biological role, methylates ribosomal protein L11. The polypeptide is Ribosomal protein L11 methyltransferase (Geobacter sulfurreducens (strain ATCC 51573 / DSM 12127 / PCA)).